Reading from the N-terminus, the 309-residue chain is Mitochondrial succinate-fumarate transporter 1 (309 aa).

Solcar repeat units follow at residues 11–96, 108–196, and 208–298; these read IPPY…FQTA, RGRF…FDIL, and LQPW…VTGL. Transmembrane regions (helical) follow at residues 17-37, 65-85, 111-131, 171-191, 214-234, and 273-293; these read AVSG…IDVI, VRAL…KYTL, FLSG…PFEV, GAAP…TAKN, MISG…FDVV, and GLLP…AVAD.

This sequence belongs to the mitochondrial carrier (TC 2.A.29) family. As to expression, expressed in root tips, cotyledons, hypocotyls, leaves, trichomes, stems, flowers, carpels, anthers, pollen and abscission zone of siliques.

It localises to the mitochondrion inner membrane. Functionally, may transport cytoplasmic succinate, derived from fatty acid oxidation, into the mitochondrial matrix in exchange of fumarate during lipid mobilization in seed germination. Conversion of seed-reserved triacylglycerols into sucrose is necessary for growth before the onset of photosynthesis and involves fatty acid beta-oxidation, the glyoxylate cycle and gluconeogenesis. This is Mitochondrial succinate-fumarate transporter 1 (SFC1) from Arabidopsis thaliana (Mouse-ear cress).